The sequence spans 316 residues: Membrane protein UL148 (316 aa).

A signal peptide spans 1 to 20 (MLRLLFTLVLLALYGPSVDA). The chain crosses the membrane as a helical span at residues 286–308 (FIVQYLNTLLITMMAAIWARVLI).

In terms of assembly, interacts with host SEL1L.

Its subcellular location is the host endoplasmic reticulum membrane. In terms of biological role, chaperone protein that plays an important role in HCMV tropism. Cooperates with UL116 to regulate the abundance of gH-gL complexes in virion. Favors the incorporation of gL into virions once UL116 has regulated the early folding steps of virion assembly. Interacts with the host ERAD machinery and slows gO decay which would otherwise be constitutively degraded. Reorganizes the host endoplasmic reticulum and activates the unfolded protein response. Additionally, plays a role in the evasion of antiviral immune response by down-regulating cell surface expression of host CD58. Mechanistically, interacts with host CD58 and retains its immature form intracellularly. The capacity to cause endoplasmic reticulum reorganization and the intracellular retention of host CD58 are functionally independent properties. This is Membrane protein UL148 (UL148) from Human cytomegalovirus (strain Merlin) (HHV-5).